A 421-amino-acid polypeptide reads, in one-letter code: Testin (421 aa).

One can recognise a PET domain in the interval 92 to 199 (MILTNPVAAK…GDVKLPCEMD (108 aa)). Residues 133 to 164 (EKQPVAGSEGAQYRKKQLAKQLPAHDQDPSKC) are disordered. The span at 155–164 (PAHDQDPSKC) shows a compositional bias: basic and acidic residues. LIM zinc-binding domains follow at residues 234-297 (YSCY…CDSE), 299-359 (PRCA…NHAV), and 362-421 (QGCH…KMMS).

It belongs to the prickle / espinas / testin family. In terms of assembly, interacts via LIM domain 1 with ZYX. Interacts (via LIM domain 3) with ENAH and VASP. Interacts with ALKBH4, talin, actin, alpha-actinin, GRIP1 and PXN. Interacts (via LIM domain 2) with ACTL7A (via N-terminus). Heterodimer with ACTL7A; the heterodimer interacts with ENAH to form a heterotrimer.

The protein resides in the cytoplasm. It is found in the cell junction. The protein localises to the focal adhesion. Functionally, scaffold protein that may play a role in cell adhesion, cell spreading and in the reorganization of the actin cytoskeleton. Plays a role in the regulation of cell proliferation. May act as a tumor suppressor. The protein is Testin (TES) of Microcebus murinus (Gray mouse lemur).